Consider the following 276-residue polypeptide: Undecaprenyl-diphosphatase 1 (276 aa).

Transmembrane regions (helical) follow at residues 85–105, 108–128, 187–207, 217–237, and 253–273; these read MNVV…EKTI, VLFA…VILW, VATE…TLYE, VDSI…AFAC, and FAWY…SGWI.

The protein belongs to the UppP family.

It is found in the cell inner membrane. The enzyme catalyses di-trans,octa-cis-undecaprenyl diphosphate + H2O = di-trans,octa-cis-undecaprenyl phosphate + phosphate + H(+). Functionally, catalyzes the dephosphorylation of undecaprenyl diphosphate (UPP). Confers resistance to bacitracin. This is Undecaprenyl-diphosphatase 1 from Burkholderia thailandensis (strain ATCC 700388 / DSM 13276 / CCUG 48851 / CIP 106301 / E264).